Here is a 362-residue protein sequence, read N- to C-terminus: Probable dual-specificity RNA methyltransferase RlmN (362 aa).

E105 acts as the Proton acceptor in catalysis. The Radical SAM core domain maps to 111 to 344 (HEYGNSICVT…VTIRREQGHD (234 aa)). C118 and C349 are joined by a disulfide. Residues C125, C129, and C132 each contribute to the [4Fe-4S] cluster site. Residues 175 to 176 (GE), S207, 230 to 232 (SLH), and N306 contribute to the S-adenosyl-L-methionine site. C349 serves as the catalytic S-methylcysteine intermediate.

Belongs to the radical SAM superfamily. RlmN family. It depends on [4Fe-4S] cluster as a cofactor.

The protein localises to the cytoplasm. It carries out the reaction adenosine(2503) in 23S rRNA + 2 reduced [2Fe-2S]-[ferredoxin] + 2 S-adenosyl-L-methionine = 2-methyladenosine(2503) in 23S rRNA + 5'-deoxyadenosine + L-methionine + 2 oxidized [2Fe-2S]-[ferredoxin] + S-adenosyl-L-homocysteine. The enzyme catalyses adenosine(37) in tRNA + 2 reduced [2Fe-2S]-[ferredoxin] + 2 S-adenosyl-L-methionine = 2-methyladenosine(37) in tRNA + 5'-deoxyadenosine + L-methionine + 2 oxidized [2Fe-2S]-[ferredoxin] + S-adenosyl-L-homocysteine. Functionally, specifically methylates position 2 of adenine 2503 in 23S rRNA and position 2 of adenine 37 in tRNAs. The chain is Probable dual-specificity RNA methyltransferase RlmN from Bacillus cytotoxicus (strain DSM 22905 / CIP 110041 / 391-98 / NVH 391-98).